The primary structure comprises 482 residues: Sugar transporter ERD6-like 16 (482 aa).

12 helical membrane-spanning segments follow: residues 42-62 (LMVL…GSCV), 80-100 (LAEF…GAVM), 117-137 (SACF…ALLL), 142-162 (FFTG…IAEI), 173-193 (TLNQ…GSLI), 197-217 (TLAL…CFIP), 280-300 (VIIG…GIGF), 316-336 (LGTI…TILI), 344-364 (LIMI…TSFL), 382-402 (GVLI…WVIM), 413-433 (IAGS…SYTF), and 443-463 (GTFY…AKMV).

It belongs to the major facilitator superfamily. Sugar transporter (TC 2.A.1.1) family.

It is found in the membrane. Functionally, sugar transporter. The sequence is that of Sugar transporter ERD6-like 16 from Arabidopsis thaliana (Mouse-ear cress).